The following is a 442-amino-acid chain: TTTVVNYTAKKSYCRRAVELTLGSLGVSSELQQKLQDVVIDRNALSLGKVLGEGEFGSVMEGRLSQPEGTPQKVAVKTMKLDNFSHREIEEFLSEAACIKDFDHPNVIKLLGVCIELSSQQIPKPMVVLPFMKYGDLHSFLLRSRLEMAPQFVPLQMLLKFMVDIALGMEYLSSRQFLHRDLAARNCMLRDDMTVCVADFGLSKKIYSGDYYRQGRIAKMPVKWIAIESLADRVYTTKSDVWAFGVTMWEIATRGMTPYPGVQNHEIYEYLFHGQRLKKPENCLDELYDIMSSCWRAEPADRPTFSQLKVHLEKLLESLPAPRGSKDVIYVNTSLPEESPDSTQDLGLDSVIPQADSDLDPGDIAEPCCSHTKAALVAVDIHDGGSRYVLESEGSPTEDAYVPQLPHEGSAWTEASTLPVGSSLAAQLPCADGCLEDSEALL.

The 272-residue stretch at 45 to 316 (LSLGKVLGEG…QLKVHLEKLL (272 aa)) folds into the Protein kinase domain. ATP is bound by residues 51 to 59 (LGEGEFGSV) and Lys-77. Asp-181 serves as the catalytic Proton acceptor. At Tyr-212 the chain carries Phosphotyrosine; by autocatalysis.

The protein belongs to the protein kinase superfamily. Tyr protein kinase family. AXL/UFO subfamily.

The protein localises to the host cell membrane. It carries out the reaction L-tyrosyl-[protein] + ATP = O-phospho-L-tyrosyl-[protein] + ADP + H(+). This is Tyrosine-protein kinase transforming protein RYK (V-RYK) from Avian retrovirus RPL30.